Here is a 220-residue protein sequence, read N- to C-terminus: Ripening-related protein grip22 (220 aa).

Residues 1 to 27 form the signal peptide; sequence MAKSALVWLASVCLVFNILSLPFLALG.

Belongs to the kiwellin family. In terms of tissue distribution, expressed in ripening fruits.

The protein resides in the secreted. The polypeptide is Ripening-related protein grip22 (grip22) (Vitis vinifera (Grape)).